Reading from the N-terminus, the 677-residue chain is DNA ligase (677 aa).

Residues 34–38, 83–84, and glutamate 115 each bind NAD(+); these read DLAFD and SL. Lysine 117 functions as the N6-AMP-lysine intermediate in the catalytic mechanism. Residues arginine 138, glutamate 180, lysine 297, and lysine 321 each coordinate NAD(+). The Zn(2+) site is built by cysteine 416, cysteine 419, cysteine 434, and cysteine 439. Positions 596-677 constitute a BRCT domain; it reads KKTSQLAGLT…LIKMLETEQA (82 aa).

Belongs to the NAD-dependent DNA ligase family. LigA subfamily. Mg(2+) serves as cofactor. It depends on Mn(2+) as a cofactor.

It carries out the reaction NAD(+) + (deoxyribonucleotide)n-3'-hydroxyl + 5'-phospho-(deoxyribonucleotide)m = (deoxyribonucleotide)n+m + AMP + beta-nicotinamide D-nucleotide.. DNA ligase that catalyzes the formation of phosphodiester linkages between 5'-phosphoryl and 3'-hydroxyl groups in double-stranded DNA using NAD as a coenzyme and as the energy source for the reaction. It is essential for DNA replication and repair of damaged DNA. This Acidobacterium capsulatum (strain ATCC 51196 / DSM 11244 / BCRC 80197 / JCM 7670 / NBRC 15755 / NCIMB 13165 / 161) protein is DNA ligase.